We begin with the raw amino-acid sequence, 284 residues long: Proteasome subunit beta 1 (284 aa).

Residues 1 to 54 (MAQRDTGGRLGAEFFTPGDSSFTAFLAAHRPALLSTRGLLPDGVRAAPDRVPHG) constitute a propeptide, removed in mature form; by autocatalysis. The active-site Nucleophile is Thr55. Residues 256-277 (RLPESETEDLSREMVEQRHTRP) are compositionally biased toward basic and acidic residues. Residues 256–284 (RLPESETEDLSREMVEQRHTRPDGPTAAM) form a disordered region.

The protein belongs to the peptidase T1B family. The 20S proteasome core is composed of 14 alpha and 14 beta subunits that assemble into four stacked heptameric rings, resulting in a barrel-shaped structure. The two inner rings, each composed of seven catalytic beta subunits, are sandwiched by two outer rings, each composed of seven alpha subunits. The catalytic chamber with the active sites is on the inside of the barrel. Has a gated structure, the ends of the cylinder being occluded by the N-termini of the alpha-subunits. Is capped by the proteasome-associated ATPase, ARC.

Its subcellular location is the cytoplasm. The catalysed reaction is Cleavage of peptide bonds with very broad specificity.. It functions in the pathway protein degradation; proteasomal Pup-dependent pathway. Its activity is regulated as follows. The formation of the proteasomal ATPase ARC-20S proteasome complex, likely via the docking of the C-termini of ARC into the intersubunit pockets in the alpha-rings, may trigger opening of the gate for substrate entry. Interconversion between the open-gate and close-gate conformations leads to a dynamic regulation of the 20S proteasome proteolysis activity. In terms of biological role, component of the proteasome core, a large protease complex with broad specificity involved in protein degradation. In Streptomyces avermitilis (strain ATCC 31267 / DSM 46492 / JCM 5070 / NBRC 14893 / NCIMB 12804 / NRRL 8165 / MA-4680), this protein is Proteasome subunit beta 1.